The sequence spans 122 residues: Large ribosomal subunit protein uL14 (122 aa).

This sequence belongs to the universal ribosomal protein uL14 family. As to quaternary structure, part of the 50S ribosomal subunit. Forms a cluster with proteins L3 and L19. In the 70S ribosome, L14 and L19 interact and together make contacts with the 16S rRNA in bridges B5 and B8.

Functionally, binds to 23S rRNA. Forms part of two intersubunit bridges in the 70S ribosome. The sequence is that of Large ribosomal subunit protein uL14 from Staphylococcus epidermidis (strain ATCC 35984 / DSM 28319 / BCRC 17069 / CCUG 31568 / BM 3577 / RP62A).